The following is a 684-amino-acid chain: Beta-taxilin (684 aa).

Residues 1–26 (MEANHSEQLSAERQSTPPGDSSSLPS) are compositionally biased toward polar residues. Residues 1–132 (MEANHSEQLS…KEPVSNKEQK (132 aa)) form a disordered region. Positions 45–64 (PEKEASVHPDISEELNRQLE) are enriched in basic and acidic residues. Acidic residues predominate over residues 93–107 (ESPDNEDGDCEETTE). 2 coiled-coil regions span residues 135–351 (KKIL…VLKE) and 378–467 (NEVF…SEKD). Residues 458–475 (IRDAEISEKDDQSQHNSD) show a composition bias toward basic and acidic residues. 3 disordered regions span residues 458-485 (IRDA…VSVD), 514-632 (ESTP…DVPA), and 646-684 (PACE…EGVD). A phosphoserine mark is found at Ser474 and Ser483. Residues 514–524 (ESTPHQSKETQ) are compositionally biased toward basic and acidic residues. Positions 613-622 (QAPQAPTEAS) are enriched in polar residues.

The protein belongs to the taxilin family. Binds to the C-terminal coiled coil region of syntaxin family members STX1A, STX3A and STX4A. Has a preference for STX1A. Expressed in skeletal muscle.

Promotes motor nerve regeneration. May be involved in intracellular vesicle traffic. This is Beta-taxilin (TXLNB) from Homo sapiens (Human).